An 88-amino-acid chain; its full sequence is Small ribosomal subunit protein bS20 (88 aa).

Positions 1-23 are disordered; it reads MANSPQAKKRARQNDKARAHNAS.

Belongs to the bacterial ribosomal protein bS20 family.

Binds directly to 16S ribosomal RNA. This is Small ribosomal subunit protein bS20 from Teredinibacter turnerae (strain ATCC 39867 / T7901).